We begin with the raw amino-acid sequence, 96 residues long: Acylphosphatase (96 aa).

One can recognise an Acylphosphatase-like domain in the interval 9-96; that stretch reads CAEIYVSGRV…DTFTDFFIKR (88 aa). Catalysis depends on residues Arg-24 and Asn-42.

This sequence belongs to the acylphosphatase family.

It catalyses the reaction an acyl phosphate + H2O = a carboxylate + phosphate + H(+). In Methanococcoides burtonii (strain DSM 6242 / NBRC 107633 / OCM 468 / ACE-M), this protein is Acylphosphatase (acyP).